Reading from the N-terminus, the 53-residue chain is UPF0391 membrane protein ECA0470 (53 aa).

Transmembrane regions (helical) follow at residues 4 to 24 (WGII…GGLA) and 30 to 47 (AAKI…VSLF).

The protein belongs to the UPF0391 family.

The protein localises to the cell membrane. This is UPF0391 membrane protein ECA0470 from Pectobacterium atrosepticum (strain SCRI 1043 / ATCC BAA-672) (Erwinia carotovora subsp. atroseptica).